We begin with the raw amino-acid sequence, 257 residues long: MKKTAFILLLFIALTWTTSPLVNGSEKSEEINEKDLRKKSELQGAALGNLKQIYYYNEKAKTENKESHDQFLQHTILFKGFFTNHSWYNDLLVDFDSKDIVDKYKGKKVDLYGAYYGYQCAGGTPNKTACMYGGVTLHDNNRLTEEKKVPINLWLDGKQNTVPLETVKTNKKNVTVQELDLQARRYLQEKYNLYNSDVFDGKVQRGLIVFHTSTEPSVNYDLFGAQGQNSNTLLRIYRDNKTINSENMHIDIYLYTS.

The first 27 residues, 1–27, serve as a signal peptide directing secretion; that stretch reads MKKTAFILLLFIALTWTTSPLVNGSEK. Cysteines 120 and 130 form a disulfide. Positions 211, 249, and 251 each coordinate Zn(2+).

Belongs to the staphylococcal/streptococcal toxin family. In terms of assembly, monomer. Interacts with MHC class II molecules alpha/HLA-DRB1 and beta/HLA-DRA chains. The interaction with MHC-II molecules occurs at both zinc-dependent and zinc-independent sites. Interacts with T-cell receptor beta variable 7-9/TRBV7-9. It depends on Zn(2+) as a cofactor.

It is found in the secreted. Its function is as follows. Staphylococcal enterotoxin that activates the host immune system by binding as unprocessed molecules to major histocompatibility (MHC) complex class II and T-cell receptor (TCR) molecules. In turn, waves of cellular activation, cytokine production, and migration into the lung tissue and airways occur via alphabeta T-cells. Also causes the intoxication staphylococcal food poisoning syndrome. The illness is characterized by high fever, hypotension, diarrhea, shock, and in some cases death. This Staphylococcus aureus (strain Newman) protein is Enterotoxin type A (sea).